We begin with the raw amino-acid sequence, 284 residues long: L-ribulose-5-phosphate 3-epimerase UlaE (284 aa).

The protein belongs to the L-ribulose-5-phosphate 3-epimerase family.

It catalyses the reaction L-ribulose 5-phosphate = L-xylulose 5-phosphate. It participates in cofactor degradation; L-ascorbate degradation; D-xylulose 5-phosphate from L-ascorbate: step 3/4. Functionally, catalyzes the isomerization of L-xylulose-5-phosphate to L-ribulose-5-phosphate. Is involved in the anaerobic L-ascorbate utilization. This Escherichia coli O127:H6 (strain E2348/69 / EPEC) protein is L-ribulose-5-phosphate 3-epimerase UlaE.